A 520-amino-acid chain; its full sequence is Cholesterol side-chain cleavage enzyme, mitochondrial (520 aa).

Residues 1 to 39 (MLARGLPLRSALVKACPPILSTVGEGWGHHRVGTGEGAG) constitute a mitochondrion transit peptide. Cys461 is a binding site for heme.

The protein belongs to the cytochrome P450 family. Interacts with FDX1/adrenodoxin. Requires heme as cofactor. As to expression, detected in adrenal cortex and corpus luteum (at protein level).

The protein resides in the mitochondrion inner membrane. The enzyme catalyses 6 reduced [adrenodoxin] + cholesterol + 3 O2 + 6 H(+) = 4-methylpentanal + pregnenolone + 6 oxidized [adrenodoxin] + 4 H2O. The catalysed reaction is 2 reduced [adrenodoxin] + cholesterol + O2 + 2 H(+) = (22R)-hydroxycholesterol + 2 oxidized [adrenodoxin] + H2O. It carries out the reaction (22R)-hydroxycholesterol + 2 reduced [adrenodoxin] + O2 + 2 H(+) = (20R,22R)-20,22-dihydroxycholesterol + 2 oxidized [adrenodoxin] + H2O. It catalyses the reaction (20R,22R)-20,22-dihydroxycholesterol + 2 reduced [adrenodoxin] + O2 + 2 H(+) = 4-methylpentanal + pregnenolone + 2 oxidized [adrenodoxin] + 2 H2O. The protein operates within lipid metabolism; C21-steroid hormone metabolism. It functions in the pathway steroid metabolism; cholesterol metabolism. Functionally, a cytochrome P450 monooxygenase that catalyzes the side-chain hydroxylation and cleavage of cholesterol to pregnenolone, the precursor of most steroid hormones. Catalyzes three sequential oxidation reactions of cholesterol, namely the hydroxylation at C22 followed with the hydroxylation at C20 to yield 20R,22R-hydroxycholesterol that is further cleaved between C20 and C22 to yield the C21-steroid pregnenolone and 4-methylpentanal. Mechanistically, uses molecular oxygen inserting one oxygen atom into a substrate and reducing the second into a water molecule. Two electrons are provided by NADPH via a two-protein mitochondrial transfer system comprising flavoprotein FDXR (adrenodoxin/ferredoxin reductase) and nonheme iron-sulfur protein FDX1 or FDX2 (adrenodoxin/ferredoxin). The protein is Cholesterol side-chain cleavage enzyme, mitochondrial (CYP11A1) of Bos taurus (Bovine).